A 272-amino-acid chain; its full sequence is Alpha-tubulin N-acetyltransferase (272 aa).

Residues Met1–Phe186 enclose the N-acetyltransferase domain. Acetyl-CoA is bound by residues Phe120–Arg133 and Ser156–Lys165. The interval Thr216–Gly244 is disordered. The span at Ser224–Gly244 shows a compositional bias: low complexity.

It belongs to the acetyltransferase ATAT1 family.

It carries out the reaction L-lysyl-[alpha-tubulin] + acetyl-CoA = N(6)-acetyl-L-lysyl-[alpha-tubulin] + CoA + H(+). In terms of biological role, specifically acetylates 'Lys-40' in alpha-tubulin on the lumenal side of microtubules. Promotes microtubule destabilization and accelerates microtubule dynamics; this activity may be independent of acetylation activity. Acetylates alpha-tubulin with a slow enzymatic rate, due to a catalytic site that is not optimized for acetyl transfer. Enters the microtubule through each end and diffuses quickly throughout the lumen of microtubules. Acetylates only long/old microtubules because of its slow acetylation rate since it does not have time to act on dynamically unstable microtubules before the enzyme is released. This chain is Alpha-tubulin N-acetyltransferase, found in Aedes aegypti (Yellowfever mosquito).